Reading from the N-terminus, the 254-residue chain is Protein orai-2 (254 aa).

The next 4 helical transmembrane spans lie at T66–L83, L94–I114, L148–L168, and A196–I216.

The protein belongs to the Orai family. In terms of assembly, oligomerizes in homomeric and heteromeric ORAI complexes. Native CRAC channels most likely consist of hexameric ORAI heteromers, implying that diverse ORAI1, ORAI2 and ORAI3 subunit combinations with distinct biophysical properties can operate in a cell-type specific way. Interacts with STIM1; this regulates channel activity. Interacts with CRACR2A/EFCAB4B.

It is found in the cell membrane. It catalyses the reaction Ca(2+)(in) = Ca(2+)(out). Its activity is regulated as follows. CRAC channels are regulated by fast Ca(2+)-dependent inactivation (FCDI), a mechanism that limits Ca(2+) influx and cell toxicity. ORAI2 channels display prominent FCDI. Inhibited by lanthanides such as Gd(3+) ions. In terms of biological role, pore-forming subunit of inward rectifying Ca(2+) release-activated Ca(2+) (CRAC) channels. Assembles with ORAI1 and ORAI3 to form hexameric CRAC channels that mediate Ca(2+) influx upon depletion of endoplasmic reticulum Ca(2+) store and channel activation by Ca(2+) sensor STIM1, a process known as store-operated Ca(2+) entry (SOCE). Various pore subunit combinations may account for distinct CRAC channel spatiotemporal and cell-type specific dynamics. ORAI1 mainly contributes to the generation of Ca(2+) plateaus involved in sustained Ca(2+) entry and is dispensable for cytosolic Ca(2+) oscillations, whereas ORAI2 and ORAI3 generate oscillatory patterns. CRAC channels assemble in Ca(2+) signaling microdomains where Ca(2+) influx is coupled to calmodulin and calcineurin signaling and activation of NFAT transcription factors recruited to ORAI1 via AKAP5. CRAC channels are the main pathway for Ca(2+) influx in T cells and promote the immune response to pathogens by activating NFAT-dependent cytokine and chemokine transcription. This chain is Protein orai-2 (ORAI2), found in Homo sapiens (Human).